Consider the following 765-residue polypeptide: Probable dipeptidyl peptidase 4 (765 aa).

The signal sequence occupies residues 1 to 14 (MKWSILLLVGCAAA). Asn-35, Asn-78, Asn-101, Asn-110, Asn-169, Asn-218, Asn-465, and Asn-490 each carry an N-linked (GlcNAc...) asparagine glycan. The active-site Charge relay system is Ser-613. N-linked (GlcNAc...) asparagine glycosylation is present at Asn-665. Active-site charge relay system residues include Asp-690 and His-725.

This sequence belongs to the peptidase S9B family.

The protein localises to the secreted. It carries out the reaction Release of an N-terminal dipeptide, Xaa-Yaa-|-Zaa-, from a polypeptide, preferentially when Yaa is Pro, provided Zaa is neither Pro nor hydroxyproline.. Extracellular dipeptidyl-peptidase which removes N-terminal dipeptides sequentially from polypeptides having unsubstituted N-termini provided that the penultimate residue is proline. Contributes to pathogenicity. The sequence is that of Probable dipeptidyl peptidase 4 (dpp4) from Aspergillus fumigatus (strain ATCC MYA-4609 / CBS 101355 / FGSC A1100 / Af293) (Neosartorya fumigata).